The chain runs to 331 residues: Holliday junction branch migration complex subunit RuvB (331 aa).

The interval 4 to 182 (KDILQSSECI…FGIPMHLEFY (179 aa)) is large ATPase domain (RuvB-L). Residues R22, G63, K66, T67, T68, 129 to 131 (EDF), R172, Y182, and R219 each bind ATP. Residue T67 participates in Mg(2+) binding. Residues 183-253 (STEELTKVIK…FADQALLRLG (71 aa)) form a small ATPAse domain (RuvB-S) region. Positions 256-331 (KLGLDRQDIK…SYLNEQTYNM (76 aa)) are head domain (RuvB-H). DNA is bound by residues R309 and R314.

It belongs to the RuvB family. As to quaternary structure, homohexamer. Forms an RuvA(8)-RuvB(12)-Holliday junction (HJ) complex. HJ DNA is sandwiched between 2 RuvA tetramers; dsDNA enters through RuvA and exits via RuvB. An RuvB hexamer assembles on each DNA strand where it exits the tetramer. Each RuvB hexamer is contacted by two RuvA subunits (via domain III) on 2 adjacent RuvB subunits; this complex drives branch migration. In the full resolvosome a probable DNA-RuvA(4)-RuvB(12)-RuvC(2) complex forms which resolves the HJ.

The protein localises to the cytoplasm. The enzyme catalyses ATP + H2O = ADP + phosphate + H(+). Its function is as follows. The RuvA-RuvB-RuvC complex processes Holliday junction (HJ) DNA during genetic recombination and DNA repair, while the RuvA-RuvB complex plays an important role in the rescue of blocked DNA replication forks via replication fork reversal (RFR). RuvA specifically binds to HJ cruciform DNA, conferring on it an open structure. The RuvB hexamer acts as an ATP-dependent pump, pulling dsDNA into and through the RuvAB complex. RuvB forms 2 homohexamers on either side of HJ DNA bound by 1 or 2 RuvA tetramers; 4 subunits per hexamer contact DNA at a time. Coordinated motions by a converter formed by DNA-disengaged RuvB subunits stimulates ATP hydrolysis and nucleotide exchange. Immobilization of the converter enables RuvB to convert the ATP-contained energy into a lever motion, pulling 2 nucleotides of DNA out of the RuvA tetramer per ATP hydrolyzed, thus driving DNA branch migration. The RuvB motors rotate together with the DNA substrate, which together with the progressing nucleotide cycle form the mechanistic basis for DNA recombination by continuous HJ branch migration. Branch migration allows RuvC to scan DNA until it finds its consensus sequence, where it cleaves and resolves cruciform DNA. This chain is Holliday junction branch migration complex subunit RuvB, found in Ehrlichia ruminantium (strain Gardel).